The chain runs to 445 residues: Glutamate--tRNA ligase 1 (445 aa).

Residues 8-18 (PSPTGKLHVGN) carry the 'HIGH' region motif. The 'KMSKS' region signature appears at 239-243 (KLSKR). Lys-242 lines the ATP pocket.

It belongs to the class-I aminoacyl-tRNA synthetase family. Glutamate--tRNA ligase type 1 subfamily. As to quaternary structure, monomer.

Its subcellular location is the cytoplasm. It carries out the reaction tRNA(Glu) + L-glutamate + ATP = L-glutamyl-tRNA(Glu) + AMP + diphosphate. In terms of biological role, catalyzes the attachment of glutamate to tRNA(Glu) in a two-step reaction: glutamate is first activated by ATP to form Glu-AMP and then transferred to the acceptor end of tRNA(Glu). The chain is Glutamate--tRNA ligase 1 from Maricaulis maris (strain MCS10) (Caulobacter maris).